We begin with the raw amino-acid sequence, 429 residues long: Chaperone SurA (429 aa).

The N-terminal stretch at M1–A19 is a signal peptide. 2 consecutive PpiC domains span residues R172 to D273 and V283 to G381.

It localises to the periplasm. It catalyses the reaction [protein]-peptidylproline (omega=180) = [protein]-peptidylproline (omega=0). In terms of biological role, chaperone involved in the correct folding and assembly of outer membrane proteins. Recognizes specific patterns of aromatic residues and the orientation of their side chains, which are found more frequently in integral outer membrane proteins. May act in both early periplasmic and late outer membrane-associated steps of protein maturation. The protein is Chaperone SurA of Chromobacterium violaceum (strain ATCC 12472 / DSM 30191 / JCM 1249 / CCUG 213 / NBRC 12614 / NCIMB 9131 / NCTC 9757 / MK).